The sequence spans 251 residues: Pyrroline-5-carboxylate reductase (251 aa).

Belongs to the pyrroline-5-carboxylate reductase family.

It localises to the cytoplasm. It carries out the reaction L-proline + NADP(+) = (S)-1-pyrroline-5-carboxylate + NADPH + 2 H(+). It catalyses the reaction L-proline + NAD(+) = (S)-1-pyrroline-5-carboxylate + NADH + 2 H(+). It functions in the pathway amino-acid biosynthesis; L-proline biosynthesis; L-proline from L-glutamate 5-semialdehyde: step 1/1. Its function is as follows. Catalyzes the reduction of 1-pyrroline-5-carboxylate (PCA) to L-proline. This is Pyrroline-5-carboxylate reductase (proC) from Methanobrevibacter smithii.